Reading from the N-terminus, the 270-residue chain is NAD kinase (270 aa).

Catalysis depends on D49, which acts as the Proton acceptor. NAD(+) is bound by residues 49–50, R54, 126–127, R152, D154, 165–170, A189, and Q227; these read DG, NE, and TAYNKS.

It belongs to the NAD kinase family. The cofactor is a divalent metal cation.

Its subcellular location is the cytoplasm. It catalyses the reaction NAD(+) + ATP = ADP + NADP(+) + H(+). In terms of biological role, involved in the regulation of the intracellular balance of NAD and NADP, and is a key enzyme in the biosynthesis of NADP. Catalyzes specifically the phosphorylation on 2'-hydroxyl of the adenosine moiety of NAD to yield NADP. This is NAD kinase from Lactococcus lactis subsp. cremoris (strain MG1363).